Reading from the N-terminus, the 387-residue chain is Succinate--CoA ligase [ADP-forming] subunit beta (387 aa).

In terms of domain architecture, ATP-grasp spans 9-245; sequence KDLLESYGLK…KSQENAKELK (237 aa). ATP-binding positions include Lys-46, 53-55, Glu-100, Tyr-103, and Glu-108; that span reads GRG. Positions 200 and 214 each coordinate Mg(2+). Residues Asn-265 and 322 to 324 each bind substrate; that span reads GIV.

Belongs to the succinate/malate CoA ligase beta subunit family. As to quaternary structure, heterotetramer of two alpha and two beta subunits. It depends on Mg(2+) as a cofactor.

It catalyses the reaction succinate + ATP + CoA = succinyl-CoA + ADP + phosphate. The catalysed reaction is GTP + succinate + CoA = succinyl-CoA + GDP + phosphate. It participates in carbohydrate metabolism; tricarboxylic acid cycle; succinate from succinyl-CoA (ligase route): step 1/1. Succinyl-CoA synthetase functions in the citric acid cycle (TCA), coupling the hydrolysis of succinyl-CoA to the synthesis of either ATP or GTP and thus represents the only step of substrate-level phosphorylation in the TCA. The beta subunit provides nucleotide specificity of the enzyme and binds the substrate succinate, while the binding sites for coenzyme A and phosphate are found in the alpha subunit. The protein is Succinate--CoA ligase [ADP-forming] subunit beta of Francisella tularensis subsp. mediasiatica (strain FSC147).